Here is a 414-residue protein sequence, read N- to C-terminus: Serine hydroxymethyltransferase (414 aa).

Residues L121 and G125–L127 contribute to the (6S)-5,6,7,8-tetrahydrofolate site. Position 229 is an N6-(pyridoxal phosphate)lysine (K229).

This sequence belongs to the SHMT family. As to quaternary structure, homodimer. The cofactor is pyridoxal 5'-phosphate.

It is found in the cytoplasm. The catalysed reaction is (6R)-5,10-methylene-5,6,7,8-tetrahydrofolate + glycine + H2O = (6S)-5,6,7,8-tetrahydrofolate + L-serine. It functions in the pathway one-carbon metabolism; tetrahydrofolate interconversion. It participates in amino-acid biosynthesis; glycine biosynthesis; glycine from L-serine: step 1/1. Functionally, catalyzes the reversible interconversion of serine and glycine with tetrahydrofolate (THF) serving as the one-carbon carrier. This reaction serves as the major source of one-carbon groups required for the biosynthesis of purines, thymidylate, methionine, and other important biomolecules. Also exhibits THF-independent aldolase activity toward beta-hydroxyamino acids, producing glycine and aldehydes, via a retro-aldol mechanism. The protein is Serine hydroxymethyltransferase of Polaromonas sp. (strain JS666 / ATCC BAA-500).